A 315-amino-acid chain; its full sequence is Vomeronasal type-1 receptor 54 (315 aa).

Residues 1–15 are Extracellular-facing; the sequence is MNKMNRLSHNTEIRN. The chain crosses the membrane as a helical span at residues 16 to 40; that stretch reads AIYSGVGIGISGNSFLLLFHIFKYI. Residues 41-51 are Cytoplasmic-facing; that stretch reads RGQRSRHIDLP. The helical transmembrane segment at 52–71 threads the bilayer; that stretch reads IGLLSLIHLVMLIAMSLVAT. At 72-90 the chain is on the extracellular side; that stretch reads DIFMPWGRWGDTTCKCVIS. Cysteine 85 and cysteine 172 are disulfide-bonded. The chain crosses the membrane as a helical span at residues 91 to 112; the sequence is LYRFCRSLSLCATSLLSILQAV. At 113–132 the chain is on the cytoplasmic side; it reads TLNPRNSCLEKFKRKSPHYM. The chain crosses the membrane as a helical span at residues 133–154; that stretch reads LGCLLFLSVFYTFISSPLATYI. At 155–193 the chain is on the extracellular side; that stretch reads TAKSNLTSPSFTYITTSCSLAPMSYSFHLTVFILLTSRD. Residues 194-212 traverse the membrane as a helical segment; the sequence is VIFVGLMLLSSGYMVTFLG. Over 213-239 the chain is Cytoplasmic; the sequence is RHKKQSQFLHITSFSLKPSAEKRAMRT. The helical transmembrane segment at 240-260 threads the bilayer; it reads ILCLMSFFVLMYTLDSIVSYI. Residues 261-267 are Extracellular-facing; sequence RSIDDGQ. Residues 268-288 form a helical membrane-spanning segment; it reads IFYCVHIFTAHGYATVSPFLI. At 289–315 the chain is on the cytoplasmic side; sequence LSTEKYIINIFRSTFGRMVTIILLRNR.

This sequence belongs to the G-protein coupled receptor 1 family.

Its subcellular location is the cell membrane. In terms of biological role, putative pheromone receptor implicated in the regulation of social and reproductive behavior. The polypeptide is Vomeronasal type-1 receptor 54 (Vmn1r54) (Mus musculus (Mouse)).